A 1009-amino-acid polypeptide reads, in one-letter code: Dihydropyrimidine dehydrogenase [NADP(+)] (1009 aa).

The 4Fe-4S ferredoxin-type 1 domain occupies 69-99 (RGALFESARCLKCADAPCQKGCPTQLDIKSF). The [4Fe-4S] cluster site is built by C78, C81, C86, and C90. Residue V128 participates in FAD binding. Positions 129, 135, 139, and 155 each coordinate [4Fe-4S] cluster. FAD contacts are provided by residues 193 to 197 (GCGPT), 217 to 225 (EKEQYLGGL), R234, and L260. Residues 339 to 342 (AGDT), 363 to 364 (RR), R370, 436 to 438 (AFG), and 479 to 484 (DLVGNG) contribute to the NADP(+) site. 478 to 486 (GDLVGNGTT) lines the FAD pocket. FMN-binding positions include S548 and 572–573 (KT). Residues N607 and 666–668 (NLS) each bind substrate. C669 functions as the Proton acceptor in the catalytic mechanism. Position 707 (K707) interacts with FMN. 734–735 (NT) is a binding site for substrate. FMN contacts are provided by residues G765, 791–793 (TGG), and 814–815 (CS). 4Fe-4S ferredoxin-type domains follow at residues 932 to 964 (VVAL…FDGK) and 965 to 995 (THIP…MVPR). 8 residues coordinate [4Fe-4S] cluster: C941, C944, C947, C951, C974, C977, C980, and C984.

This sequence belongs to the dihydropyrimidine dehydrogenase family. Homodimer. Requires [4Fe-4S] cluster as cofactor. FAD serves as cofactor. FMN is required as a cofactor.

The protein localises to the cytoplasm. It catalyses the reaction 5,6-dihydrouracil + NADP(+) = uracil + NADPH + H(+). It functions in the pathway amino-acid biosynthesis; beta-alanine biosynthesis. Its function is as follows. Involved in pyrimidine base degradation. Catalyzes the reduction of uracil and thymine. The protein is Dihydropyrimidine dehydrogenase [NADP(+)] (pyd1) of Dictyostelium discoideum (Social amoeba).